A 653-amino-acid polypeptide reads, in one-letter code: Protein CBFA2T3 (653 aa).

Over residues 1 to 10 (MPASRLRDRA) the composition is skewed to basic and acidic residues. The interval 1–109 (MPASRLRDRA…HTHREDGPAT (109 aa)) is disordered. Positions 1-127 (MPASRLRDRA…CLKWSMVCLL (127 aa)) are required for nucleolar targeting (in isoform 1). Residues 1-430 (MPASRLRDRA…RRCQEADREE (430 aa)) are mediates interaction with PDE7A (in isoform 2). The interval 1–435 (MPASRLRDRA…ADREELNHWA (435 aa)) is mediates localization to the nucleus. A compositionally biased stretch (low complexity) spans 11–23 (ASSASGSTCGSMS). Pro residues predominate over residues 75–86 (STPPSMPPPPPA). The tract at residues 145 to 242 (PNGFSNGPAT…IPFLKANLPL (98 aa)) is interaction with ZBTB33. The region spanning 171–266 (ARQLSKLKRF…TPAQYLAQHE (96 aa)) is the TAFH domain. Residues 176–268 (KLKRFLTTLQ…AQYLAQHEQL (93 aa)) form an interaction with HIF1A region. The segment at 284–342 (LLEVNENGKRRTPDRTKENGSDRDPLHPEHLSKRPCTLNPAQRYSPSNGPPQPTPPPHY) is disordered. Residues 289–315 (ENGKRRTPDRTKENGSDRDPLHPEHLS) are compositionally biased toward basic and acidic residues. Over residues 331 to 341 (NGPPQPTPPPH) the composition is skewed to pro residues. The nervy homology region 2 (NHR2); essential for down-regulation of PFKFB3, PFKFB4 and PDK1 expression stretch occupies residues 394 to 412 (EEWKHLNNLLNCIMDMVEK). Positions 434-446 (WARRYSDAEDTKK) are enriched in basic and acidic residues. The interval 434–472 (WARRYSDAEDTKKGPAPAAARPRSSSAGPEGPQLDVPRE) is disordered. Residues 447 to 462 (GPAPAAARPRSSSAGP) show a composition bias toward low complexity. Residues Ser457 and Ser459 each carry the phosphoserine modification. Residue Thr479 is modified to Phosphothreonine. Positions 485–506 (DIWRKAEEAVNEVKRQAMSELQ) are mediates interaction with PRKAR2A. Residues 485–533 (DIWRKAEEAVNEVKRQAMSELQKAVSDAERKAHELITTERAKMERALAE) form a nervy homology region 3 (NHR3); essential for down-regulation of PFKFB3, PFKFB4 and PDK1 expression region. Residues 488 to 543 (RKAEEAVNEVKRQAMSELQKAVSDAERKAHELITTERAKMERALAEAKRQASEDAL) adopt a coiled-coil conformation. Residues Cys556, Cys559, Cys567, Cys570, Cys576, Cys580, His588, and Cys592 each contribute to the Zn(2+) site. The segment at 556 to 592 (CWNCGRKASETCSGCNAARYCGSFCQHRDWEKHHHVC) adopts an MYND-type zinc-finger fold. Residues 603–653 (VADPVPGPPEAAHSLGPSLPVGAASPSEAGSAGPSRPGSPSPPGPLDTVPR) form a disordered region. Over residues 622 to 638 (PVGAASPSEAGSAGPSR) the composition is skewed to low complexity. A phosphoserine mark is found at Ser637 and Ser641. At Thr650 the chain carries Phosphothreonine.

The protein belongs to the CBFA2T family. In terms of assembly, homooligomer. Homotetramerization is mediated by nervy homology region 2 (NRH2). Can interact with RUNX1T1 and CBFA2T2; heterotetramerization between members of the CBFA2T family is proposed. Component of a TAL-1 complex composed at least of CBFA2T3, LDB1, TAL1 and TCF3. Interacts with ERBB4, HDAC1, HDAC2, HDAC3, HDAC6, HDAC8, NCOR1, NCOR2, and ZNF652. According to PubMed:12242670, may not interact with HDAC6. Interacts with PLXNA1, PLXNA3 and PRKAR1A. Isoform 2 interacts with PRKAR2A, PDE7A and probably PDE4A. Interacts with ZBTB4, ZBTB38 and ZBTB33. Interacts with HIF1A and EGLN1. Interacts with the AML1-MTG8/ETO fusion protein. Widely expressed with higher expression in heart, pancreas, skeletal muscle, spleen, thymus and peripheral blood leukocytes. Expressed in hematopoietic cells (at protein level).

It localises to the nucleus. The protein resides in the nucleolus. The protein localises to the nucleoplasm. Its subcellular location is the golgi apparatus membrane. Its function is as follows. Transcriptional corepressor which facilitates transcriptional repression via its association with DNA-binding transcription factors and recruitment of other corepressors and histone-modifying enzymes. Can repress the expression of MMP7 in a ZBTB33-dependent manner. Reduces the protein levels and stability of the transcriptinal regulator HIF1A; interacts with EGLN1 and promotes the HIF1A prolyl hydroxylation-dependent ubiquitination and proteasomal degradation pathway. Contributes to inhibition of glycolysis and stimulation of mitochondrial respiration by down-regulating the expression of glycolytic genes including PFKFB3, PFKFB4, PDK1, PFKP, LDHA and HK1 which are direct targets of HIF1A. Regulates the proliferation and the differentiation of erythroid progenitors by repressing the expression of TAL1 target genes. Plays a role in granulocyte differentiation. In terms of biological role, isoform 2 functions as an A-kinase-anchoring protein. The chain is Protein CBFA2T3 (CBFA2T3) from Homo sapiens (Human).